The primary structure comprises 128 residues: MIDLYLSPSCTSCRKARAWLQSHKVPFVEHNILTQPMTTNDLRHILTKTENGTEDIISTRSKVFQKLAVDVDNLTINELLDLVTEFPNLLRRPIITDSKHLQIGFNEDEIRAFLPREYRRAEMLSTID.

A disulfide bridge connects residues Cys-10 and Cys-13.

The protein belongs to the ArsC family. Spx subfamily. As to quaternary structure, interacts with the C-terminal domain of the alpha subunit of the RNAP.

It localises to the cytoplasm. In terms of biological role, global transcriptional regulator that plays a key role in stress response and exerts either positive or negative regulation of genes. Acts by interacting with the C-terminal domain of the alpha subunit of the RNA polymerase (RNAP). This interaction can enhance binding of RNAP to the promoter region of target genes and stimulate their transcription, or block interaction of RNAP with activator. This is Global transcriptional regulator Spx 1 from Lactococcus lactis subsp. lactis (strain IL1403) (Streptococcus lactis).